The primary structure comprises 270 residues: Replication protein A 32 kDa subunit (270 aa).

Residue M1 is modified to N-acetylmethionine. Phosphoserine; by PRKDC occurs at positions 4 and 8. T21 carries the post-translational modification Phosphothreonine; by PRKDC. Residues 21-40 (TQSPGGFGSPAPSQAEKKSR) are disordered. Position 23 is a phosphoserine; by CDK2 (S23). Residue S29 is modified to Phosphoserine; by CDK1. S33 bears the Phosphoserine; by PRKDC mark. Glycyl lysine isopeptide (Lys-Gly) (interchain with G-Cter in ubiquitin) cross-links involve residues K37 and K38. A DNA-binding region (OB) is located at residues 74-148 (VTIVGIIRHA…KSLVAFKIMP (75 aa)). The interval 187-270 (GMSEAGNFGG…DDHFKSTDAE (84 aa)) is interaction with RAD52, TIPIN, UNG and XPA.

Belongs to the replication factor A protein 2 family. In terms of assembly, component of the replication protein A complex (RPA/RP-A), a heterotrimeric complex composed of RPA1, RPA2 and RPA3. Interacts with PRPF19; the PRP19-CDC5L complex is recruited to the sites of DNA repair where it ubiquitinates the replication protein A complex (RPA). Interacts with SERTAD3. Interacts with TIPIN. Interacts with TIMELESS. Interacts with PPP4R2; the interaction is direct, DNA damage-dependent and mediates the recruitment of the PP4 catalytic subunit PPP4C. Interacts (hyperphosphorylated) with RAD51. Interacts with SMARCAL1; the interaction is direct and mediates the recruitment to the RPA complex of SMARCAL1. Interacts with RAD52 and XPA; those interactions are direct and associate RAD52 and XPA to the RPA complex. Interacts with FBH1. Interacts with ETAA1; the interaction is direct and promotes ETAA1 recruitment at stalled replication forks. Interacts with DDI2. Interacts (in unphosphorylated form via N-terminus) with EIF4EBP3; the interaction enhances EIF4EBP3-mediated inhibition of EIF4E-mediated mRNA nuclear export. In terms of processing, differentially phosphorylated throughout the cell cycle, becoming phosphorylated at the G1-S transition and dephosphorylated in late mitosis. Mainly phosphorylated at Ser-23 and Ser-29, by cyclin A-CDK2 and cyclin B-CDK1, respectively during DNA replication and mitosis. Dephosphorylation may require the serine/threonine-protein phosphatase 4. Phosphorylation at Ser-23 and Ser-29 is a prerequisite for further phosphorylation. Becomes hyperphosphorylated on additional residues including Ser-4, Ser-8, Thr-21 and Ser-33 in response to DNA damage. Hyperphosphorylation is mediated by ATM, ATR and PRKDC. Primarily recruited to DNA repair nuclear foci as a hypophosphorylated form it undergoes subsequent hyperphosphorylation, catalyzed by ATR. Hyperphosphorylation is required for RAD51 recruitment to chromatin and efficient DNA repair. Phosphorylation at Thr-21 depends upon RFWD3 presence. DNA damage-induced 'Lys-63'-linked polyubiquitination by PRPF19 mediates ATRIP recruitment to the RPA complex at sites of DNA damage and activation of ATR. Ubiquitinated by RFWD3 at stalled replication forks in response to DNA damage: ubiquitination by RFWD3 does not lead to degradation by the proteasome and promotes removal of the RPA complex from stalled replication forks, promoting homologous recombination.

Its subcellular location is the nucleus. It is found in the PML body. In terms of biological role, as part of the heterotrimeric replication protein A complex (RPA/RP-A), binds and stabilizes single-stranded DNA intermediates, that form during DNA replication or upon DNA stress. It prevents their reannealing and in parallel, recruits and activates different proteins and complexes involved in DNA metabolism. Thereby, it plays an essential role both in DNA replication and the cellular response to DNA damage. In the cellular response to DNA damage, the RPA complex controls DNA repair and DNA damage checkpoint activation. Through recruitment of ATRIP activates the ATR kinase a master regulator of the DNA damage response. It is required for the recruitment of the DNA double-strand break repair factors RAD51 and RAD52 to chromatin in response to DNA damage. Also recruits to sites of DNA damage proteins like XPA and XPG that are involved in nucleotide excision repair and is required for this mechanism of DNA repair. Also plays a role in base excision repair (BER) probably through interaction with UNG. Also recruits SMARCAL1/HARP, which is involved in replication fork restart, to sites of DNA damage. May also play a role in telomere maintenance. This Pongo abelii (Sumatran orangutan) protein is Replication protein A 32 kDa subunit (RPA2).